Here is a 404-residue protein sequence, read N- to C-terminus: Pre-heme d1 synthase (404 aa).

The 214-residue stretch at 22 to 235 (GTPKPVVIWN…LIARALESAE (214 aa)) folds into the Radical SAM core domain. 7 residues coordinate [4Fe-4S] cluster: C36, C40, C43, C340, C343, C349, and C371.

Belongs to the radical SAM superfamily. [4Fe-4S] cluster is required as a cofactor.

The protein operates within porphyrin-containing compound metabolism. In terms of biological role, involved in heme d1 biosynthesis. Radical SAM enzyme that catalyzes the removal of two propionate side chains from the intermediate 12,18-didecarboxysiroheme (DDSH) and may introduce the keto functions on rings A and B, yielding the heme d1 precursor dihydro-heme d1. This is Pre-heme d1 synthase from Dinoroseobacter shibae (strain DSM 16493 / NCIMB 14021 / DFL 12).